A 320-amino-acid polypeptide reads, in one-letter code: Methionyl-tRNA formyltransferase (320 aa).

Residue Ser-114–Pro-117 participates in (6S)-5,6,7,8-tetrahydrofolate binding.

Belongs to the Fmt family.

The catalysed reaction is L-methionyl-tRNA(fMet) + (6R)-10-formyltetrahydrofolate = N-formyl-L-methionyl-tRNA(fMet) + (6S)-5,6,7,8-tetrahydrofolate + H(+). Its function is as follows. Attaches a formyl group to the free amino group of methionyl-tRNA(fMet). The formyl group appears to play a dual role in the initiator identity of N-formylmethionyl-tRNA by promoting its recognition by IF2 and preventing the misappropriation of this tRNA by the elongation apparatus. The chain is Methionyl-tRNA formyltransferase from Acinetobacter baumannii (strain AB0057).